Consider the following 604-residue polypeptide: ATP-dependent RNA helicase DBP1 (604 aa).

The segment at 1-79 (MSDGSGRYVP…RASGSGGFGG (79 aa)) is disordered. The segment covering 32 to 45 (SRYSGNGFFSSPNR) has biased composition (polar residues). Residues 138–166 (TEFKSPPLDELLLENVELANFSKPTPVQK) carry the Q motif motif. The region spanning 169–358 (IPIVTKNRDL…RDFLKDYIFL (190 aa)) is the Helicase ATP-binding domain. 182–189 (AQTGSGKT) contributes to the ATP binding site. The DEAD box signature appears at 302 to 305 (DEAD). In terms of domain architecture, Helicase C-terminal spans 386–529 (LLDILINEID…EVPQFLVNMV (144 aa)). The segment at 535-591 (FGRGGRNSRTGSNRGRGSNTRDYRHSNKDDWGSLGSSRRGFRSNDNRGFGNNWGSSS) is disordered. Positions 541 to 552 (NSRTGSNRGRGS) are enriched in low complexity. The segment covering 553-565 (NTRDYRHSNKDDW) has biased composition (basic and acidic residues).

The protein belongs to the DEAD box helicase family. DDX3/DED1 subfamily.

It localises to the cytoplasm. It catalyses the reaction ATP + H2O = ADP + phosphate + H(+). ATP-binding RNA helicase involved in translation initiation. Remodels RNA in response to ADP and ATP concentrations by facilitating disruption, but also formation of RNA duplexes. Redundant to DED1, may be required in conditions in which DED1 expression is decreased. This is ATP-dependent RNA helicase DBP1 (DBP1) from Candida glabrata (strain ATCC 2001 / BCRC 20586 / JCM 3761 / NBRC 0622 / NRRL Y-65 / CBS 138) (Yeast).